A 145-amino-acid polypeptide reads, in one-letter code: RING-H2 finger protein ATL18 (145 aa).

A signal peptide spans 1-29; sequence MISMLFPRSPLCTAAIVFYTCVCIPLGRL. An RING-type; atypical zinc finger spans residues 62–105; the sequence is CPICLVEFEAEDAVTHLPRCAHLFHINCIEPWLLRGHLTCPLCR. Residues 125–145 form a helical membrane-spanning segment; that stretch reads STLYLSIFFFFCIFLHLLGYL.

The protein belongs to the RING-type zinc finger family. ATL subfamily.

Its subcellular location is the membrane. It catalyses the reaction S-ubiquitinyl-[E2 ubiquitin-conjugating enzyme]-L-cysteine + [acceptor protein]-L-lysine = [E2 ubiquitin-conjugating enzyme]-L-cysteine + N(6)-ubiquitinyl-[acceptor protein]-L-lysine.. Its pathway is protein modification; protein ubiquitination. The sequence is that of RING-H2 finger protein ATL18 (ATL18) from Arabidopsis thaliana (Mouse-ear cress).